The chain runs to 426 residues: MKLQKPKGTQDILPGDAAKWQYVESVARDTFSQYNYGEIRTPMFEHYEVISRSVGDTTDIVTKEMYDFYDKGDRHITLRPEGTAPVVRSYVENKLFAPEVQKPVKLYYIGSMFRYERPQAGRLREFHQIGVECFGAANPATDVETIAMAYHLFEKLGIKDVTLHLNSLGSPESRAAYRQALIDYLTPMRDQLSKDSQRRLDENPLRVLDSKEKEDKLAVEKAPSILDYLDEESQAHFEAVKDMLEALDIPYVIDTNMVRGLDYYSHTIFEFITSVEGSDLTICAGGRYDSLVGYFGGPETPGFGFGLGLERLLMIIEKQGITLPIETEMDIYLAVLGDGANSKALELVQAIRRQGFTAERDYLGRKIKAQFKSADTFKAKLVMTLGESEVEAGKAVIKNNRSRQEVEVSFEDMMTNFANISEQLLS.

Belongs to the class-II aminoacyl-tRNA synthetase family. In terms of assembly, homodimer.

It is found in the cytoplasm. It catalyses the reaction tRNA(His) + L-histidine + ATP = L-histidyl-tRNA(His) + AMP + diphosphate + H(+). This chain is Histidine--tRNA ligase, found in Streptococcus pyogenes serotype M1.